A 91-amino-acid chain; its full sequence is UPF0250 protein NGK_1021 (91 aa).

Belongs to the UPF0250 family.

This chain is UPF0250 protein NGK_1021, found in Neisseria gonorrhoeae (strain NCCP11945).